A 426-amino-acid chain; its full sequence is Histidine--tRNA ligase (426 aa).

This sequence belongs to the class-II aminoacyl-tRNA synthetase family.

Its subcellular location is the cytoplasm. It catalyses the reaction tRNA(His) + L-histidine + ATP = L-histidyl-tRNA(His) + AMP + diphosphate + H(+). This Thermoplasma volcanium (strain ATCC 51530 / DSM 4299 / JCM 9571 / NBRC 15438 / GSS1) protein is Histidine--tRNA ligase (hisS).